A 692-amino-acid chain; its full sequence is UvrABC system protein B (692 aa).

Residues 32–418 (DNIENGEKAQ…QTDTIVEQII (387 aa)) form the Helicase ATP-binding domain. 45–52 (GATGTGKT) contributes to the ATP binding site. A Beta-hairpin motif is present at residues 98–121 (YYDYYQPEAYVPSSDTYIEKDSSV). Residues 436–631 (QIDDLVGEIH…TIKKEIRDLI (196 aa)) form the Helicase C-terminal domain. The region spanning 656-691 (KALVKKLEKEMQQAASALDFEGAAQLRDMVLELRAM) is the UVR domain.

Belongs to the UvrB family. As to quaternary structure, forms a heterotetramer with UvrA during the search for lesions. Interacts with UvrC in an incision complex.

Its subcellular location is the cytoplasm. The UvrABC repair system catalyzes the recognition and processing of DNA lesions. A damage recognition complex composed of 2 UvrA and 2 UvrB subunits scans DNA for abnormalities. Upon binding of the UvrA(2)B(2) complex to a putative damaged site, the DNA wraps around one UvrB monomer. DNA wrap is dependent on ATP binding by UvrB and probably causes local melting of the DNA helix, facilitating insertion of UvrB beta-hairpin between the DNA strands. Then UvrB probes one DNA strand for the presence of a lesion. If a lesion is found the UvrA subunits dissociate and the UvrB-DNA preincision complex is formed. This complex is subsequently bound by UvrC and the second UvrB is released. If no lesion is found, the DNA wraps around the other UvrB subunit that will check the other stand for damage. The sequence is that of UvrABC system protein B from Lactococcus lactis subsp. lactis (strain IL1403) (Streptococcus lactis).